We begin with the raw amino-acid sequence, 174 residues long: Protein PopB (174 aa).

The interval 1–174 is disordered; the sequence is MSHSKIKAGG…EAMKIKDDDD (174 aa). Residues 50-65 show a composition bias toward polar residues; that stretch reads LNKSNLGSDSQTWTPG. Low complexity predominate over residues 66 to 78; sequence STMVSLKSRSSSS. Basic and acidic residues predominate over residues 79 to 89; the sequence is HKPDTGGDTKP. Low complexity predominate over residues 147–161; the sequence is IALQRAIQRQTQTRQ. Residues 162–174 show a composition bias toward basic and acidic residues; sequence KMQEAMKIKDDDD.

The protein resides in the secreted. Functionally, probably involved in host-pathogen interactions. The polypeptide is Protein PopB (popB) (Ralstonia nicotianae (strain ATCC BAA-1114 / GMI1000) (Ralstonia solanacearum)).